A 62-amino-acid chain; its full sequence is Large ribosomal subunit protein bL33 (62 aa).

This sequence belongs to the bacterial ribosomal protein bL33 family.

The chain is Large ribosomal subunit protein bL33 from Bacteroides thetaiotaomicron (strain ATCC 29148 / DSM 2079 / JCM 5827 / CCUG 10774 / NCTC 10582 / VPI-5482 / E50).